The following is a 368-amino-acid chain: UDP-N-acetylglucosamine--N-acetylmuramyl-(pentapeptide) pyrophosphoryl-undecaprenol N-acetylglucosamine transferase (368 aa).

Residues 13–15 (TGG), N124, R167, S195, and Q296 contribute to the UDP-N-acetyl-alpha-D-glucosamine site.

It belongs to the glycosyltransferase 28 family. MurG subfamily.

The protein resides in the cell inner membrane. The catalysed reaction is di-trans,octa-cis-undecaprenyl diphospho-N-acetyl-alpha-D-muramoyl-L-alanyl-D-glutamyl-meso-2,6-diaminopimeloyl-D-alanyl-D-alanine + UDP-N-acetyl-alpha-D-glucosamine = di-trans,octa-cis-undecaprenyl diphospho-[N-acetyl-alpha-D-glucosaminyl-(1-&gt;4)]-N-acetyl-alpha-D-muramoyl-L-alanyl-D-glutamyl-meso-2,6-diaminopimeloyl-D-alanyl-D-alanine + UDP + H(+). It functions in the pathway cell wall biogenesis; peptidoglycan biosynthesis. Its function is as follows. Cell wall formation. Catalyzes the transfer of a GlcNAc subunit on undecaprenyl-pyrophosphoryl-MurNAc-pentapeptide (lipid intermediate I) to form undecaprenyl-pyrophosphoryl-MurNAc-(pentapeptide)GlcNAc (lipid intermediate II). The polypeptide is UDP-N-acetylglucosamine--N-acetylmuramyl-(pentapeptide) pyrophosphoryl-undecaprenol N-acetylglucosamine transferase (Maricaulis maris (strain MCS10) (Caulobacter maris)).